Consider the following 436-residue polypeptide: Repulsive guidance molecule B (436 aa).

A signal peptide spans 1 to 48 (MGVRAAPSCAAAPAAAGAEQSRRPGLWPPSPPPPLLLLLLLSLGLLHA). The N-linked (GlcNAc...) asparagine glycan is linked to asparagine 123. 2 disulfides stabilise this stretch: cysteine 142–cysteine 229 and cysteine 166–cysteine 315. An N-linked (GlcNAc...) asparagine glycan is attached at asparagine 386. A lipid anchor (GPI-anchor amidated cysteine) is attached at cysteine 415. Residues 416–436 (GGCRDLPVGLGLTCLILIMFL) constitute a propeptide, removed in mature form.

It belongs to the repulsive guidance molecule (RGM) family. In terms of assembly, homooligomer. Interacts with DRGX. Interacts with BMP2 and BMP4. Interacts with the BMP type I receptors ACVR1, BMPR1A and BMPR1B and with the BMP type II receptor ACVR2B. The functional complex with its receptor NEO1/neogenin appears to be a heterotetramer with a 2:2 stoichiometry, RGM molecules acting as staples that bring two NEO1 receptors together without interacting themselves, this arrangement leads to activation of downstream signaling via RhoA. In terms of processing, GPI-anchored. Autocatalytically cleaved at low pH; the two chains remain linked via two disulfide bonds. In terms of tissue distribution, detected in neonatal and adult dorsal root ganglion sensory neurons, spinal cord, and brain (at protein level). Also expressed at high levels in retinal ganglion cells of developing mouse, extending to the optic nerve (at protein level). Expressed in testis, epididymis, ovary, uterus, and pituitary.

The protein localises to the cell membrane. Its subcellular location is the membrane raft. Its function is as follows. Member of the repulsive guidance molecule (RGM) family that contributes to the patterning of the developing nervous system. Acts as a bone morphogenetic protein (BMP) coreceptor that potentiates BMP signaling. Promotes neuronal adhesion. May inhibit neurite outgrowth. This is Repulsive guidance molecule B from Mus musculus (Mouse).